The primary structure comprises 524 residues: Probable cytochrome P450 519C1 (524 aa).

Residues 1 to 21 (MNILLLIFYFLVCFLIFDFIK) form a helical membrane-spanning segment. Residue Cys470 coordinates heme.

Belongs to the cytochrome P450 family. The cofactor is heme.

It is found in the membrane. The polypeptide is Probable cytochrome P450 519C1 (cyp519C1) (Dictyostelium discoideum (Social amoeba)).